A 137-amino-acid chain; its full sequence is Golgin subfamily A member 7 (137 aa).

2 S-palmitoyl cysteine lipidation sites follow: Cys-69 and Cys-72.

It belongs to the ERF4 family. As to quaternary structure, interacts with GOLGA3. Interacts with ZDHHC9. Post-translationally, palmitoylated on Cys-69 and Cys-72; which is required for Golgi localization and interaction with GOLGA3.

The protein localises to the golgi apparatus membrane. Functionally, may be involved in protein transport from Golgi to cell surface. The ZDHHC9-GOLGA7 complex is a palmitoyltransferase specific for HRAS and NRAS. In Bos taurus (Bovine), this protein is Golgin subfamily A member 7 (GOLGA7).